A 357-amino-acid chain; its full sequence is Decorin (357 aa).

An N-terminal signal peptide occupies residues 1–16 (MRLVLLFVLLLPVCLA). Residues 17–30 (TRFHQKGLFDFMIE) constitute a propeptide that is removed on maturation. Ser46 carries O-linked (Xyl...) (glycosaminoglycan) serine glycosylation. 2 cysteine pairs are disulfide-bonded: Cys52-Cys58 and Cys56-Cys65. LRR repeat units lie at residues 71-91 (ERVP…NNKI), 92-115 (TEIK…NNKI), 116-139 (SKIS…KNNL), 140-160 (KELP…ENEI), 161-184 (SKLR…TNPL), 185-210 (KSSG…DTNI), 211-231 (TSIP…GNKI), 232-255 (SKID…FNSI), 256-279 (SSVE…NNEL), 280-302 (VRVP…NNKI), 303-332 (ASIG…SNPV), and 333-357 (QYWE…GNYK). N-linked (GlcNAc...) asparagine glycosylation occurs at Asn209. N-linked (GlcNAc...) asparagine glycosylation is present at Asn260. A disulfide bridge connects residues Cys311 and Cys344.

Belongs to the small leucine-rich proteoglycan (SLRP) family. SLRP class I subfamily. As to quaternary structure, binds to type I and type II collagen, to fibronectin and TGF-beta. Forms a ternary complex with MFAP2 and ELN. In terms of processing, the attached glycosaminoglycan chain can be either chondroitin sulfate or dermatan sulfate depending upon the tissue of origin.

It localises to the secreted. Its subcellular location is the extracellular space. The protein localises to the extracellular matrix. May affect the rate of fibrils formation. This chain is Decorin (DCN), found in Gallus gallus (Chicken).